The following is a 550-amino-acid chain: Hydroxylamine reductase (550 aa).

Residues Cys3, Cys6, Cys18, and Cys25 each contribute to the [2Fe-2S] cluster site. His249, Glu273, Cys317, Cys405, Cys433, Cys458, Glu492, and Lys494 together coordinate hybrid [4Fe-2O-2S] cluster. Cys405 carries the post-translational modification Cysteine persulfide.

The protein belongs to the HCP family. It depends on [2Fe-2S] cluster as a cofactor. The cofactor is hybrid [4Fe-2O-2S] cluster.

The protein localises to the cytoplasm. It catalyses the reaction A + NH4(+) + H2O = hydroxylamine + AH2 + H(+). In terms of biological role, catalyzes the reduction of hydroxylamine to form NH(3) and H(2)O. The protein is Hydroxylamine reductase of Salmonella paratyphi A (strain ATCC 9150 / SARB42).